Reading from the N-terminus, the 333-residue chain is 6-phosphogluconolactonase (333 aa).

Belongs to the cycloisomerase 2 family.

The catalysed reaction is 6-phospho-D-glucono-1,5-lactone + H2O = 6-phospho-D-gluconate + H(+). Its pathway is carbohydrate degradation; pentose phosphate pathway; D-ribulose 5-phosphate from D-glucose 6-phosphate (oxidative stage): step 2/3. Its function is as follows. Catalyzes the hydrolysis of 6-phosphogluconolactone to 6-phosphogluconate. This Cronobacter sakazakii (strain ATCC BAA-894) (Enterobacter sakazakii) protein is 6-phosphogluconolactonase.